The following is a 1087-amino-acid chain: MTSGNVMLKHQDVTIERIEKFLSDTYFVRENLYGKLISLKSSEAVKVKVSPKVEGISYKDAIQLEYKDTKIGESFGPSWTNYWFKVTIDVPTDWKDKTIHFIWNSSCEGLIWMNGIAIQGLIGGTWQDLREEYKLIENSKGGEHFEFYIEISCNGMFGVGKDGLINPCDPDRTFELTKAEIRVKNKEANELYMYLQMLYDVGKNFPKESLRKKQAIWVANDIINQCNVNDSRTFSKCIELAKKEFFSQHNSESQTRVWAVGHCHIDLCWLWSFEKTKEKCARSFSTQILYMDYYPQFKFTQSQAQAYQWTKENYPELYERIKEKVVTGQFIPTGGTWVEMDGNLPSGESFIRQFLYGQRFFEKEFGKKCTEFFLPDTFGYSAQLPQVIRHMGIENFITQKLSWNNLNKFPHSTFIWEGIDGSSVLTHFPPADTYNSQADVKEIVMSSSNNKDIDRCNESMLLYGNGDGGGGPTIPMIERLTILKDTAGIPKIEFSTPAQFFKQLEPHRSKLNKWVGELYFELHRGTYTSQATTKRGNRLCEIELHATEMLTSYCELFVEGFKSPNLSKLWQQVLLCQFHDALPGSSIQVCYEDILKIHQQVLVECKNIITQSMNHITGTLLKIDNLPTTSTTTSTTTTSTTECTKNSEFVLAFNANDFEISRVIEIPKSNKDIQAQYINAIQTSYNGLPLGTVSLPPNGFSAINISTSGDNRTINRKPGYPCTAIEKNDASGDILIDNQFISIVIGSNGRIKSLIEKSANREVIKQDGSLGNRLIIFDDTCLFWDAWDQEIFSLEKPLSILEGTCKIIENGPLRCVVQVHYDSKGLPSGNGSVNQTIIVHFNSARVDFETNVNWNEAHKLLRVDFDTNIRAKNANYEIQFGHIERPTHYNTSWDFARFEVVGHKWADLSEYDFGMALLNDCKYGYSTLGGRIGLSLLRSPKSPDDTCDMGSHKFTYSIYPHRGSLQSASVIKEGYSLNNNFYISETPFSLASTTHIDKTFISTNKEAIIVDTIKKAEDGTSFVVRVYESFGGATTFNFTSSILPIPFKSIIECNGLEEVNQSSKSYKFNDTIKINPFEIKTFRFISN.

Zn(2+)-binding residues include His264, Asp266, Asp376, and His579. Asp376 (nucleophile) is an active-site residue.

This sequence belongs to the glycosyl hydrolase 38 family. It depends on Zn(2+) as a cofactor.

The catalysed reaction is Hydrolysis of terminal, non-reducing alpha-D-mannose residues in alpha-D-mannosides.. The chain is Alpha-mannosidase G (manG) from Dictyostelium discoideum (Social amoeba).